We begin with the raw amino-acid sequence, 420 residues long: Dynein axonemal assembly factor 4 (420 aa).

In terms of domain architecture, CS spans 3–87; sequence LQVSDYSWQQ…KEAAMWETLS (85 aa). The segment at 7–103 is mediates interaction with ESR1 and STUB1; it reads DYSWQQTKTA…EMMQRIREKS (97 aa). TPR repeat units follow at residues 290 to 323, 324 to 357, and 366 to 399; these read PEWL…NNKM, PLLY…LMPP, and MKAH…DPSN.

As to quaternary structure, interacts with ZMYND10. Interacts with STUB1. Interacts with ESR1 and ESR2. Interacts with DNAAF2. Interacts with CCT3, CCT4, CCT5 and CCT8. Interacts with DNAAF6/PIH1D3.

It is found in the nucleus. The protein localises to the cytoplasm. Its subcellular location is the cell projection. It localises to the neuron projection. The protein resides in the dynein axonemal particle. Involved in neuronal migration during development of the cerebral neocortex. May regulate the stability and proteasomal degradation of the estrogen receptors that play an important role in neuronal differentiation, survival and plasticity. Axonemal dynein assembly factor required for ciliary motility. This Pan troglodytes (Chimpanzee) protein is Dynein axonemal assembly factor 4.